Here is a 154-residue protein sequence, read N- to C-terminus: Prefoldin subunit alpha (154 aa).

The interval 123-154 (EAEQLEQQAQQAQQQMMQQQMQAQQQPQDGEQ) is disordered. Low complexity predominate over residues 127 to 154 (LEQQAQQAQQQMMQQQMQAQQQPQDGEQ).

This sequence belongs to the prefoldin alpha subunit family. As to quaternary structure, heterohexamer of two alpha and four beta subunits.

The protein localises to the cytoplasm. Functionally, molecular chaperone capable of stabilizing a range of proteins. Seems to fulfill an ATP-independent, HSP70-like function in archaeal de novo protein folding. In Halobacterium salinarum (strain ATCC 29341 / DSM 671 / R1), this protein is Prefoldin subunit alpha.